The chain runs to 333 residues: Ketol-acid reductoisomerase (NADP(+)) (333 aa).

Residues 2–182 (AKMYYDSDAS…GCTRAGVLET (181 aa)) form the KARI N-terminal Rossmann domain. Residues 25–28 (YGSQ), R48, S51, and 83–86 (DERQ) contribute to the NADP(+) site. Residue H108 is part of the active site. Residue G134 participates in NADP(+) binding. In terms of domain architecture, KARI C-terminal knotted spans 183 to 328 (TFKEETETDL…AELRAMMPFI (146 aa)). Residues D191, E195, E227, and E231 each coordinate Mg(2+). S252 provides a ligand contact to substrate.

It belongs to the ketol-acid reductoisomerase family. Mg(2+) serves as cofactor.

It carries out the reaction (2R)-2,3-dihydroxy-3-methylbutanoate + NADP(+) = (2S)-2-acetolactate + NADPH + H(+). It catalyses the reaction (2R,3R)-2,3-dihydroxy-3-methylpentanoate + NADP(+) = (S)-2-ethyl-2-hydroxy-3-oxobutanoate + NADPH + H(+). It participates in amino-acid biosynthesis; L-isoleucine biosynthesis; L-isoleucine from 2-oxobutanoate: step 2/4. Its pathway is amino-acid biosynthesis; L-valine biosynthesis; L-valine from pyruvate: step 2/4. Functionally, involved in the biosynthesis of branched-chain amino acids (BCAA). Catalyzes an alkyl-migration followed by a ketol-acid reduction of (S)-2-acetolactate (S2AL) to yield (R)-2,3-dihydroxy-isovalerate. In the isomerase reaction, S2AL is rearranged via a Mg-dependent methyl migration to produce 3-hydroxy-3-methyl-2-ketobutyrate (HMKB). In the reductase reaction, this 2-ketoacid undergoes a metal-dependent reduction by NADPH to yield (R)-2,3-dihydroxy-isovalerate. The chain is Ketol-acid reductoisomerase (NADP(+)) from Desulfitobacterium hafniense (strain DSM 10664 / DCB-2).